The primary structure comprises 381 residues: L-lactate dehydrogenase (381 aa).

Residues 1 to 380 (MIISASTDYR…TRDSLVRELG (380 aa)) enclose the FMN hydroxy acid dehydrogenase domain. A substrate-binding site is contributed by Tyr24. FMN is bound by residues Ser106 and Gln127. Tyr129 contributes to the substrate binding site. Thr155 is an FMN binding site. Residue Arg164 participates in substrate binding. Lys251 is a binding site for FMN. The Proton acceptor role is filled by His275. Arg278 is a binding site for substrate. 306-330 (DSGIRSGLDVVRMIALGADTVLIGR) serves as a coordination point for FMN.

It belongs to the FMN-dependent alpha-hydroxy acid dehydrogenase family. Homotetramer. Requires FMN as cofactor.

It is found in the cell inner membrane. The catalysed reaction is (S)-lactate + A = pyruvate + AH2. Its function is as follows. Catalyzes the conversion of L-lactate to pyruvate. Is coupled to the respiratory chain. This is L-lactate dehydrogenase from Pseudomonas putida (strain GB-1).